Here is a 243-residue protein sequence, read N- to C-terminus: Secreted RxLR effector protein 28 (243 aa).

Residues 1 to 26 form the signal peptide; sequence MHVSRIIAHIALATAITATTVSPTDA. The RxLR signature appears at 49-52; it reads RGLR. Residues 187–243 are disordered; that stretch reads NVDEDKGQNFGHSVSGPPTTTLTGPHTKSGIPPFENLVAPAKGSMPNTRRNGYQFFE. Positions 199–216 are enriched in low complexity; the sequence is SVSGPPTTTLTGPHTKSG.

The protein belongs to the RxLR effector family.

The protein resides in the secreted. The protein localises to the host cytoplasm. Its subcellular location is the host nucleus. In terms of biological role, effector that significantly enhances susceptibilities of grapevine and tobacco to pathogens. Acts as a broad suppressor of cell death to interrupt plant immunity. Completely inhibits cell death induced by cell death-inducing proteins, including the PAMP elicitor INF1 from P.infestans. Reduces the transcriptional levels of the defense-related genes and impairs the H(2)O(2) accumulation in N.benthamiana. This chain is Secreted RxLR effector protein 28, found in Plasmopara viticola (Downy mildew of grapevine).